The chain runs to 385 residues: Pectate lyase E (385 aa).

Residues 1–30 form the signal peptide; sequence MKNTRVRSIGTKSLLAAVVTAALMATSAYA. Ca(2+) is bound at residue D164. The stretch at 177 to 182 is repeat 1; sequence DHVTIS. Positions 177–218 are 2 X 6 AA approximate repeats; that stretch reads DHVTISDGSFTDDKYTTKDGEKYVQHDGALDIKKGSDYVTIS. Position 207 (D207) interacts with Ca(2+). Repeat unit 2 spans residues 213–218; it reads DYVTIS. R260 is an active-site residue.

This sequence belongs to the polysaccharide lyase 1 family. PLBC subfamily. Requires Ca(2+) as cofactor.

It is found in the secreted. The catalysed reaction is Eliminative cleavage of (1-&gt;4)-alpha-D-galacturonan to give oligosaccharides with 4-deoxy-alpha-D-galact-4-enuronosyl groups at their non-reducing ends.. The protein operates within glycan metabolism; pectin degradation; 2-dehydro-3-deoxy-D-gluconate from pectin: step 2/5. Functionally, involved in maceration and soft-rotting of plant tissue. In Dickeya chrysanthemi (Pectobacterium chrysanthemi), this protein is Pectate lyase E (pelE).